Reading from the N-terminus, the 397-residue chain is MSNSFVLVINSGSSSLKFAVIDSVSGDAVLSGLGECFGLSDARMSWKFNGEKKEISIEGDDSHHKIAIGKLVGLTEELGLAQDIVAVGHRIVHGGEKFTKTVRITEEVTQEIEKLADLAPLHNPAGAIGIRAAVEAFPSLPQFAVFDTAFHQTMPQRAFTGAIAKELYTDFGIRRYGFHGTSHYFVSREAAKMINKPIEESSFISVHLGNGASVCAINNGESVDTSMGFTPLSGLMMGTRCGDLDPGIIEYLLKKGWSQEKVFNSLNKASGFLGVSGLTSDARGILEAMEEGHEGAALAFQVFTYRVSKYIASYLAALDSFDGIIFTGGIGENSMPIRREILKNLKLLGFVEDVKGNEDARFGNAGVIATSELLGAKALVIPTNEEWVIAQQSVELL.

Asparagine 10 lines the Mg(2+) pocket. Lysine 17 contributes to the ATP binding site. Arginine 90 contacts substrate. Aspartate 147 functions as the Proton donor/acceptor in the catalytic mechanism. Residues 207–211 (HLGNG), 281–283 (DAR), and 329–333 (GIGEN) each bind ATP. Residue glutamate 385 coordinates Mg(2+).

It belongs to the acetokinase family. In terms of assembly, homodimer. Mg(2+) is required as a cofactor. It depends on Mn(2+) as a cofactor.

It is found in the cytoplasm. The catalysed reaction is acetate + ATP = acetyl phosphate + ADP. The protein operates within metabolic intermediate biosynthesis; acetyl-CoA biosynthesis; acetyl-CoA from acetate: step 1/2. In terms of biological role, catalyzes the formation of acetyl phosphate from acetate and ATP. Can also catalyze the reverse reaction. This is Acetate kinase 2 from Vibrio parahaemolyticus serotype O3:K6 (strain RIMD 2210633).